We begin with the raw amino-acid sequence, 591 residues long: Max-binding protein MNT (591 aa).

The residue at position 2 (serine 2) is an N-acetylserine. 2 disordered regions span residues 17–122 (AQQQ…APRQ) and 182–223 (PGVQ…GIGT). Residues 22 to 44 (RAREEQERLRLEREREREQEQKR) are compositionally biased toward basic and acidic residues. Pro residues-rich tracts occupy residues 63–84 (EAPP…PLAT) and 102–120 (SLPP…PLAP). Over residues 205-216 (PAEEAKSSEQKK) the composition is skewed to basic and acidic residues. The 52-residue stretch at 222 to 273 (GTREVHNKLEKNRRAHLKECFETLKRNIPNVDDKKTSNLSVLRTALRYIQSL) folds into the bHLH domain. Residues 273–301 (LKRKEKEYEHEMERLAREKIATQQRLAEL) are leucine-zipper. Residues 321–426 (TGQPEDDQAS…PPPATPTQTL (106 aa)) form a disordered region. Residues 336-346 (EGEDNVDEEME) are compositionally biased toward acidic residues. Residues 374–383 (STAPAPLPTH) show a composition bias toward pro residues. Positions 390–411 (PVALSPAHLPVQQQQPPQQKTP) are enriched in low complexity. Pro residues predominate over residues 412–421 (LPAPPPPPAT).

Efficient DNA binding requires dimerization with another bHLH protein. Binds DNA as a homodimer or a heterodimer with MAX.

It is found in the nucleus. Functionally, binds DNA as a heterodimer with MAX and represses transcription. Binds to the canonical E box sequence 5'-CACGTG-3' and, with higher affinity, to 5'-CACGCG-3'. In Mus musculus (Mouse), this protein is Max-binding protein MNT (Mnt).